The following is a 322-amino-acid chain: Retinal homeobox protein Rx-A (322 aa).

The Octapeptide motif signature appears at 32–39; it reads HSIEAILG. Positions 75 to 87 are enriched in basic and acidic residues; it reads TEEIHPQQEHLED. The tract at residues 75–136 is disordered; that stretch reads TEEIHPQQEH…KKKHRRNRTT (62 aa). Polar residues predominate over residues 100–117; it reads KTSSECLSPGLSTSNSDN. A DNA-binding region (homeobox) is located at residues 130–189; sequence HRRNRTTFTTYQLHELERAFEKSHYPDVYSREELAMKVNLPEVRVQVWFQNRRAKWRRQE. The short motif at 302–315 is the OAR element; it reads NSIASLRMKAKEHI. Positions 308–312 match the Nuclear localization signal motif; that stretch reads RMKAK.

This sequence belongs to the paired homeobox family. Bicoid subfamily. In terms of tissue distribution, highly expressed in anterior neural plate followed by neural retina, pigmented epithelium, in pineal gland, diencephalon floor and epiphysis. At later stages, the neuroretina remains the primary site of expression. No expression in the developing lens and cornea.

The protein resides in the nucleus. Functionally, plays a critical role in eye formation by regulating the initial specification of retinal cells and/or their subsequent proliferation. The chain is Retinal homeobox protein Rx-A (rax-a) from Xenopus laevis (African clawed frog).